A 217-amino-acid chain; its full sequence is Nascent polypeptide-associated complex subunit alpha (217 aa).

Residues 1-45 (MPELTEIKSEAAPSTSAEAKPEDVRVEDDGSDSDSDGGMPGLEEA) are disordered. Basic and acidic residues predominate over residues 19–28 (AKPEDVRVED). The NAC-A/B domain maps to 70–135 (SRGEKKARKI…AKIEDLSQQA (66 aa)). The interval 154–177 (SVGATTSVAPIAEEDEEDVDDTGV) is disordered. Positions 165 to 176 (AEEDEEDVDDTG) are enriched in acidic residues. Residues 177 to 217 (VDEKDIELVITQANTTRAKAIKALKNNNNDIVNAIMELTML) form the UBA domain.

Belongs to the NAC-alpha family. Part of the nascent polypeptide-associated complex (NAC), consisting of Nac-alpha and bicaudal (bic).

In terms of biological role, may promote appropriate targeting of ribosome-nascent polypeptide complexes. Required for correct localization of the osk/oskar protein to the posterior pole during embryonic development. The osk protein directs the recruitment of molecules responsible for posterior body patterning and germline formation in the embryo. This Drosophila melanogaster (Fruit fly) protein is Nascent polypeptide-associated complex subunit alpha (Nacalpha).